Consider the following 416-residue polypeptide: S-layer protein B (416 aa).

Residues 1–20 form the signal peptide; sequence MKYNLLPLILLSLLVAPLLA. The stretch at 310-330 forms a coiled coil; the sequence is IASLNSTIQSLESQISSLSST. A helical transmembrane segment spans residues 392 to 412; it reads IALAVSIIAIIISIVVLILVF.

Belongs to the Sulfolobales SlaB family. In terms of assembly, the mushroom-shaped unit cells of the Sulfolobales' S-layers may consist of three SlaB subunits and six SlaA subunits.

The protein localises to the secreted. It is found in the cell wall. Its subcellular location is the S-layer. The protein resides in the cell membrane. In terms of biological role, S-layer small protein. May anchor the complex to the cell membrane. This is S-layer protein B from Metallosphaera sedula (strain ATCC 51363 / DSM 5348 / JCM 9185 / NBRC 15509 / TH2).